The primary structure comprises 144 residues: MPPKKKKITALIKLQINAGKATPAPPVGPALGQHGVNIMEFCKQYNAATESQTGNVVPVEITVYDDRSFTFVTKTPPAARLILKAAGVDKGSGTPHRVKVAKLTPAQVREIAQTKLPDLNANSIEAAEKIIAGTARSMGITVGE.

Belongs to the universal ribosomal protein uL11 family. In terms of assembly, part of the ribosomal stalk of the 50S ribosomal subunit. Interacts with L10 and the large rRNA to form the base of the stalk. L10 forms an elongated spine to which L12 dimers bind in a sequential fashion forming a multimeric L10(L12)X complex. In terms of processing, one or more lysine residues are methylated.

Functionally, forms part of the ribosomal stalk which helps the ribosome interact with GTP-bound translation factors. This is Large ribosomal subunit protein uL11 from Parafrankia sp. (strain EAN1pec).